The primary structure comprises 184 residues: ATP synthase subunit b, chloroplastic (184 aa).

The chain crosses the membrane as a helical span at residues 27–49; sequence LATNLINLSVVLGVLIFFGKGVL.

Belongs to the ATPase B chain family. F-type ATPases have 2 components, F(1) - the catalytic core - and F(0) - the membrane proton channel. F(1) has five subunits: alpha(3), beta(3), gamma(1), delta(1), epsilon(1). F(0) has four main subunits: a(1), b(1), b'(1) and c(10-14). The alpha and beta chains form an alternating ring which encloses part of the gamma chain. F(1) is attached to F(0) by a central stalk formed by the gamma and epsilon chains, while a peripheral stalk is formed by the delta, b and b' chains.

It is found in the plastid. The protein resides in the chloroplast thylakoid membrane. In terms of biological role, f(1)F(0) ATP synthase produces ATP from ADP in the presence of a proton or sodium gradient. F-type ATPases consist of two structural domains, F(1) containing the extramembraneous catalytic core and F(0) containing the membrane proton channel, linked together by a central stalk and a peripheral stalk. During catalysis, ATP synthesis in the catalytic domain of F(1) is coupled via a rotary mechanism of the central stalk subunits to proton translocation. Component of the F(0) channel, it forms part of the peripheral stalk, linking F(1) to F(0). The polypeptide is ATP synthase subunit b, chloroplastic (Helianthus annuus (Common sunflower)).